A 228-amino-acid polypeptide reads, in one-letter code: 7-cyano-7-deazaguanine synthase (228 aa).

An ATP-binding site is contributed by 16 to 26 (FSGGQDSTTCL). Zn(2+) contacts are provided by Cys193, Cys201, Cys204, and Cys207.

It belongs to the QueC family. Requires Zn(2+) as cofactor.

It carries out the reaction 7-carboxy-7-deazaguanine + NH4(+) + ATP = 7-cyano-7-deazaguanine + ADP + phosphate + H2O + H(+). It functions in the pathway purine metabolism; 7-cyano-7-deazaguanine biosynthesis. Functionally, catalyzes the ATP-dependent conversion of 7-carboxy-7-deazaguanine (CDG) to 7-cyano-7-deazaguanine (preQ(0)). The protein is 7-cyano-7-deazaguanine synthase of Pasteurella multocida (strain Pm70).